The primary structure comprises 120 residues: Small ribosomal subunit protein bS16 (120 aa).

The tract at residues 81-120 is disordered; that stretch reads GLAKRPARNNPQKAEPGEKSKERAAKRAEKAAAPAEDAAA. Basic and acidic residues predominate over residues 95-110; sequence EPGEKSKERAAKRAEK. The span at 111–120 shows a compositional bias: low complexity; that stretch reads AAAPAEDAAA.

Belongs to the bacterial ribosomal protein bS16 family.

The chain is Small ribosomal subunit protein bS16 from Methylorubrum populi (strain ATCC BAA-705 / NCIMB 13946 / BJ001) (Methylobacterium populi).